The chain runs to 404 residues: LL-diaminopimelate aminotransferase (404 aa).

Residues Y15 and G42 each coordinate substrate. Pyridoxal 5'-phosphate is bound by residues Y72, 108–109, Y132, N188, Y219, and 247–249; these read AK and SFS. Substrate-binding residues include K109, Y132, and N188. At K250 the chain carries N6-(pyridoxal phosphate)lysine. Residues R258 and N288 each contribute to the pyridoxal 5'-phosphate site. N288 and R384 together coordinate substrate.

This sequence belongs to the class-I pyridoxal-phosphate-dependent aminotransferase family. LL-diaminopimelate aminotransferase subfamily. As to quaternary structure, homodimer. The cofactor is pyridoxal 5'-phosphate.

It catalyses the reaction (2S,6S)-2,6-diaminopimelate + 2-oxoglutarate = (S)-2,3,4,5-tetrahydrodipicolinate + L-glutamate + H2O + H(+). It participates in amino-acid biosynthesis; L-lysine biosynthesis via DAP pathway; LL-2,6-diaminopimelate from (S)-tetrahydrodipicolinate (aminotransferase route): step 1/1. Involved in the synthesis of meso-diaminopimelate (m-DAP or DL-DAP), required for both lysine and peptidoglycan biosynthesis. Catalyzes the direct conversion of tetrahydrodipicolinate to LL-diaminopimelate. The sequence is that of LL-diaminopimelate aminotransferase from Lachnospira eligens (strain ATCC 27750 / DSM 3376 / VPI C15-48 / C15-B4) (Eubacterium eligens).